Here is a 171-residue protein sequence, read N- to C-terminus: Peptide deformylase 1 (171 aa).

Fe cation is bound by residues C99 and H141. Residue E142 is part of the active site. H145 lines the Fe cation pocket.

It belongs to the polypeptide deformylase family. The cofactor is Fe(2+).

It carries out the reaction N-terminal N-formyl-L-methionyl-[peptide] + H2O = N-terminal L-methionyl-[peptide] + formate. Functionally, removes the formyl group from the N-terminal Met of newly synthesized proteins. Requires at least a dipeptide for an efficient rate of reaction. N-terminal L-methionine is a prerequisite for activity but the enzyme has broad specificity at other positions. The chain is Peptide deformylase 1 from Xanthomonas campestris pv. campestris (strain ATCC 33913 / DSM 3586 / NCPPB 528 / LMG 568 / P 25).